Consider the following 158-residue polypeptide: Cytochrome c-type biogenesis protein CcmE (158 aa).

Residues 1 to 23 lie on the Cytoplasmic side of the membrane; sequence MNSQSFKNFPSLKFISKKRRKER. The helical; Signal-anchor for type II membrane protein transmembrane segment at 24 to 44 threads the bilayer; it reads LLMVLLCLFIMAITTGLIVYA. At 45–158 the chain is on the periplasmic side; sequence MRNTANFFRT…DRLKKHHDIK (114 aa). Residues H138 and Y142 each coordinate heme.

The protein belongs to the CcmE/CycJ family.

It is found in the cell inner membrane. Its function is as follows. Heme chaperone required for the biogenesis of c-type cytochromes. Transiently binds heme delivered by CcmC and transfers the heme to apo-cytochromes in a process facilitated by CcmF and CcmH. The chain is Cytochrome c-type biogenesis protein CcmE from Bartonella bacilliformis (strain ATCC 35685 / KC583 / Herrer 020/F12,63).